A 257-amino-acid polypeptide reads, in one-letter code: RING-H2 finger protein ATL5 (257 aa).

Residues 28–48 (IMLASVIILFVAVILILCFHS) traverse the membrane as a helical segment. Residues 113 to 155 (CSVCLSEFEEDDEGRVLPKCGHVFHVDCIDTWFRSRSSCPLCR) form an RING-type; atypical zinc finger. Residues 181–209 (EDTEAGSSSSSDESESSTPSSSSGSPVRF) are disordered. Over residues 185–206 (AGSSSSSDESESSTPSSSSGSP) the composition is skewed to low complexity.

Belongs to the RING-type zinc finger family. ATL subfamily.

The protein localises to the membrane. It carries out the reaction S-ubiquitinyl-[E2 ubiquitin-conjugating enzyme]-L-cysteine + [acceptor protein]-L-lysine = [E2 ubiquitin-conjugating enzyme]-L-cysteine + N(6)-ubiquitinyl-[acceptor protein]-L-lysine.. The protein operates within protein modification; protein ubiquitination. The sequence is that of RING-H2 finger protein ATL5 (ATL5) from Arabidopsis thaliana (Mouse-ear cress).